The following is a 187-amino-acid chain: uncharacterized protein (187 aa).

This is an uncharacterized protein from Acanthamoeba polyphaga mimivirus (APMV).